Reading from the N-terminus, the 264-residue chain is Teichoic acids export ATP-binding protein TagH (264 aa).

Positions 5–243 (VNIKNVTKEY…YEAFLNDFKK (239 aa)) constitute an ABC transporter domain. ATP is bound at residue 57–64 (GINGSGKS).

This sequence belongs to the ABC transporter superfamily. Teichoic acids exporter (TC 3.A.1.104.1) family. The complex is composed of two ATP-binding proteins (TagH) and two transmembrane proteins (TagG).

It localises to the cell membrane. The enzyme catalyses ATP + H2O + teichoic acidSide 1 = ADP + phosphate + teichoic acidSide 2.. Functionally, part of the ABC transporter complex TagGH involved in teichoic acids export. Responsible for energy coupling to the transport system. The polypeptide is Teichoic acids export ATP-binding protein TagH (Staphylococcus aureus (strain USA300)).